The sequence spans 134 residues: MLSPKRTRFRKQHRGRMKGISHRGNHISFGKYALQALEPAWITSRQIEAGRRAMTRNARRGGKIWVRIFPDKPVTLRPAETRMGSGKGSPEYWVAVVKPGRILYEMGGVTENIARRAISLAASKMPIRTQFIIS.

The disordered stretch occupies residues 1–22 (MLSPKRTRFRKQHRGRMKGISH).

The protein belongs to the universal ribosomal protein uL16 family. Part of the 50S ribosomal subunit.

It is found in the plastid. It localises to the chloroplast. The chain is Large ribosomal subunit protein uL16c from Nicotiana tabacum (Common tobacco).